Here is an 87-residue protein sequence, read N- to C-terminus: Small ribosomal subunit protein uS17 (87 aa).

The protein belongs to the universal ribosomal protein uS17 family. As to quaternary structure, part of the 30S ribosomal subunit.

Functionally, one of the primary rRNA binding proteins, it binds specifically to the 5'-end of 16S ribosomal RNA. The protein is Small ribosomal subunit protein uS17 of Exiguobacterium sibiricum (strain DSM 17290 / CCUG 55495 / CIP 109462 / JCM 13490 / 255-15).